Consider the following 338-residue polypeptide: Starch-binding domain-containing protein 1 (338 aa).

The Extracellular segment spans residues 1 to 6 (MGAVWS). A helical transmembrane segment spans residues 7 to 23 (ALLVGGGLAGALILWLL). The Cytoplasmic portion of the chain corresponds to 24–338 (RGDSGAPGKD…KVVHGWWGIH (315 aa)). Disordered stretches follow at residues 30-73 (PGKD…RELV) and 120-148 (KIPD…WRLP). Positions 36-52 (AEPPQKGAPPGEAAAPG) are enriched in low complexity. The span at 53–62 (DGPGGGGSGG) shows a compositional bias: gly residues. Ser-68 carries the phosphoserine modification. Positions 122–132 (PDTHSRADSEA) are enriched in basic and acidic residues. Phosphoserine is present on residues Ser-140, Ser-167, and Ser-179. Positions 185–191 (HEDWEVV) match the LIR motif. 7 positions are modified to phosphoserine: Ser-195, Ser-196, Ser-205, Ser-209, Ser-212, Ser-220, and Ser-223. The 100-residue stretch at 238 to 337 (SLKPQQVSIQ…DKVVHGWWGI (100 aa)) folds into the CBM20 domain.

In terms of assembly, interacts with the ATG8 family proteins GABARAP and GABARAPL1. Interacts with several glycogen-associated proteins, such as GYS2 (liver glycogen synthase), GDE (glycogen debranching enzyme), GBE1 (glycogen branching enzyme 1) and EPM2A (Laforin). Post-translationally, ubiquitinated, which leads to proteasomal degradation. In terms of tissue distribution, expressed at high level in glycogen-accumulating organs such as muscle and liver. Trace signals are also found in brain, kidney, and pancreas.

The protein resides in the preautophagosomal structure membrane. It is found in the endoplasmic reticulum membrane. It localises to the cell membrane. Its subcellular location is the sarcolemma. The protein localises to the T-tubule. Acts as a cargo receptor for glycogen. Delivers its cargo to an autophagic pathway called glycophagy, resulting in the transport of glycogen to lysosomes. The sequence is that of Starch-binding domain-containing protein 1 from Mus musculus (Mouse).